A 145-amino-acid chain; its full sequence is Hemoglobin subunit beta (145 aa).

Residues 1–145 enclose the Globin domain; it reads MLTAEEKAAV…VANALAHRYH (145 aa). Thr-11 carries the phosphothreonine modification. Ser-43 carries the post-translational modification Phosphoserine. Lys-58 is modified (N6-acetyllysine). Residue His-62 participates in heme b binding. Position 81 is an N6-acetyllysine (Lys-81). His-91 is a heme b binding site. S-nitrosocysteine is present on Cys-92.

It belongs to the globin family. As to quaternary structure, heterotetramer of two alpha chains and two beta chains. As to expression, red blood cells.

In terms of biological role, involved in oxygen transport from the lung to the various peripheral tissues. Functions as an endogenous inhibitor of enkephalin-degrading enzymes such as DPP3, and may thereby play a role as a regulator of pain and inflammation. In Bos taurus (Bovine), this protein is Hemoglobin subunit beta (HBB).